We begin with the raw amino-acid sequence, 245 residues long: 1-(5-phosphoribosyl)-5-[(5-phosphoribosylamino)methylideneamino] imidazole-4-carboxamide isomerase (245 aa).

D7 serves as the catalytic Proton acceptor. Residue D129 is the Proton donor of the active site.

It belongs to the HisA/HisF family.

It is found in the cytoplasm. The catalysed reaction is 1-(5-phospho-beta-D-ribosyl)-5-[(5-phospho-beta-D-ribosylamino)methylideneamino]imidazole-4-carboxamide = 5-[(5-phospho-1-deoxy-D-ribulos-1-ylimino)methylamino]-1-(5-phospho-beta-D-ribosyl)imidazole-4-carboxamide. It participates in amino-acid biosynthesis; L-histidine biosynthesis; L-histidine from 5-phospho-alpha-D-ribose 1-diphosphate: step 4/9. The sequence is that of 1-(5-phosphoribosyl)-5-[(5-phosphoribosylamino)methylideneamino] imidazole-4-carboxamide isomerase from Escherichia coli O45:K1 (strain S88 / ExPEC).